Here is a 535-residue protein sequence, read N- to C-terminus: Glutamate--cysteine ligase (535 aa).

Belongs to the glutamate--cysteine ligase type 1 family. Type 1 subfamily.

The catalysed reaction is L-cysteine + L-glutamate + ATP = gamma-L-glutamyl-L-cysteine + ADP + phosphate + H(+). The protein operates within sulfur metabolism; glutathione biosynthesis; glutathione from L-cysteine and L-glutamate: step 1/2. This is Glutamate--cysteine ligase from Pseudomonas savastanoi pv. phaseolicola (strain 1448A / Race 6) (Pseudomonas syringae pv. phaseolicola (strain 1448A / Race 6)).